The following is a 322-amino-acid chain: MRVAVLGAGAWGTALAVLLASKGVPTRLWARRKAQAEALKAMRENRDYLPGVALPAYLYPTHDPEEALEGAELAVLAVPSKALRETVAGLPPAPWYVSATKGLFYGEEGVRTPAEVVEALTQRPVVALSGPNHAEEVARFLPTASVAAGPEDLARRVQALFSGPTFRVYTSRDRRGVELGGAVKNVLALAAGMVDGLRLGDNAKAALLTRGLKEMVRFGTALGGEEATFYGLAGLGDLLATAYSLHSRNRMAGESLVRGVDREALEARGVVEGLYAVKAMVAWGKEQGVELPVAEAVHRVAHEGLDPLAALKALMAREPKEE.

NADPH-binding residues include Trp11, Arg31, Arg32, and Lys101. The sn-glycerol 3-phosphate site is built by Lys101 and Gly130. Ala134 lines the NADPH pocket. Residues Lys184, Asp237, Ser247, Arg248, and Asn249 each coordinate sn-glycerol 3-phosphate. Lys184 (proton acceptor) is an active-site residue. Arg248 provides a ligand contact to NADPH. Residues Val270 and Glu272 each contribute to the NADPH site.

The protein belongs to the NAD-dependent glycerol-3-phosphate dehydrogenase family.

The protein resides in the cytoplasm. It catalyses the reaction sn-glycerol 3-phosphate + NAD(+) = dihydroxyacetone phosphate + NADH + H(+). It carries out the reaction sn-glycerol 3-phosphate + NADP(+) = dihydroxyacetone phosphate + NADPH + H(+). Its pathway is membrane lipid metabolism; glycerophospholipid metabolism. In terms of biological role, catalyzes the reduction of the glycolytic intermediate dihydroxyacetone phosphate (DHAP) to sn-glycerol 3-phosphate (G3P), the key precursor for phospholipid synthesis. This is Glycerol-3-phosphate dehydrogenase [NAD(P)+] from Thermus thermophilus (strain ATCC BAA-163 / DSM 7039 / HB27).